The chain runs to 784 residues: LPS-assembly protein LptD (784 aa).

A signal peptide spans 1 to 24 (MKKRIPTLLATMIASALYSHQGLA). 2 cysteine pairs are disulfide-bonded: Cys-31–Cys-724 and Cys-173–Cys-725.

This sequence belongs to the LptD family. Component of the lipopolysaccharide transport and assembly complex. Interacts with LptE and LptA. Post-translationally, contains two intramolecular disulfide bonds.

The protein localises to the cell outer membrane. Together with LptE, is involved in the assembly of lipopolysaccharide (LPS) at the surface of the outer membrane. This is LPS-assembly protein LptD from Salmonella paratyphi A (strain ATCC 9150 / SARB42).